The primary structure comprises 264 residues: Acyl-[acyl-carrier-protein]--UDP-N-acetylglucosamine O-acyltransferase (264 aa).

This sequence belongs to the transferase hexapeptide repeat family. LpxA subfamily. As to quaternary structure, homotrimer.

The protein localises to the cytoplasm. It carries out the reaction a (3R)-hydroxyacyl-[ACP] + UDP-N-acetyl-alpha-D-glucosamine = a UDP-3-O-[(3R)-3-hydroxyacyl]-N-acetyl-alpha-D-glucosamine + holo-[ACP]. Its pathway is glycolipid biosynthesis; lipid IV(A) biosynthesis; lipid IV(A) from (3R)-3-hydroxytetradecanoyl-[acyl-carrier-protein] and UDP-N-acetyl-alpha-D-glucosamine: step 1/6. Involved in the biosynthesis of lipid A, a phosphorylated glycolipid that anchors the lipopolysaccharide to the outer membrane of the cell. This is Acyl-[acyl-carrier-protein]--UDP-N-acetylglucosamine O-acyltransferase from Rickettsia africae (strain ESF-5).